A 481-amino-acid polypeptide reads, in one-letter code: Glutamate--tRNA ligase (481 aa).

The short motif at P28–G38 is the 'HIGH' region element. Basic and acidic residues predominate over residues R139 to P148. The tract at residues R139–R159 is disordered. The 'KMSKS' region signature appears at K260 to R264. K263 contacts ATP.

The protein belongs to the class-I aminoacyl-tRNA synthetase family. Glutamate--tRNA ligase type 1 subfamily. As to quaternary structure, monomer.

Its subcellular location is the cytoplasm. It catalyses the reaction tRNA(Glu) + L-glutamate + ATP = L-glutamyl-tRNA(Glu) + AMP + diphosphate. Its function is as follows. Catalyzes the attachment of glutamate to tRNA(Glu) in a two-step reaction: glutamate is first activated by ATP to form Glu-AMP and then transferred to the acceptor end of tRNA(Glu). The chain is Glutamate--tRNA ligase from Bordetella bronchiseptica (strain ATCC BAA-588 / NCTC 13252 / RB50) (Alcaligenes bronchisepticus).